A 601-amino-acid chain; its full sequence is uncharacterized protein (601 aa).

Belongs to the chlamydial CPn_1016/CT_858/TC_0248 family.

This is an uncharacterized protein from Chlamydia muridarum (strain MoPn / Nigg).